The chain runs to 149 residues: Large ribosomal subunit protein uL13 (149 aa).

Belongs to the universal ribosomal protein uL13 family. Part of the 50S ribosomal subunit.

In terms of biological role, this protein is one of the early assembly proteins of the 50S ribosomal subunit, although it is not seen to bind rRNA by itself. It is important during the early stages of 50S assembly. The polypeptide is Large ribosomal subunit protein uL13 (Chlorobium phaeovibrioides (strain DSM 265 / 1930) (Prosthecochloris vibrioformis (strain DSM 265))).